The primary structure comprises 215 residues: Probable glutathione S-transferase GSTF2 (215 aa).

The GST N-terminal domain maps to 2–83 (APMKLYGSTL…YVCRKNKPEL (82 aa)). Residues Ser12, 41-42 (HK), 54-55 (QV), and 67-68 (ES) each bind glutathione. The 128-residue stretch at 88-215 (DLKESAMVDV…KVASLMKPPA (128 aa)) folds into the GST C-terminal domain.

It belongs to the GST superfamily. Phi family. Constitutively expressed in roots. Expressed in anthers, callus, panicles, sheaths and stems (at protein level).

It carries out the reaction RX + glutathione = an S-substituted glutathione + a halide anion + H(+). Conjugation of reduced glutathione to a wide number of exogenous and endogenous hydrophobic electrophiles. The protein is Probable glutathione S-transferase GSTF2 (GSTF2) of Oryza sativa subsp. japonica (Rice).